The chain runs to 229 residues: MPAAGPPLLLLGTPGSGKTALLFAAALEAAGEGQGPVLFLTRRPLQSMPRGTGTTLDPMRLQKIRFQYPPSTRELFRLLCSAHEAPGPAPSLLLLDGLEEYLAEDPEPQEAAYLIALLLDTAAHFSHRLGPGRDCGLMVALQTQEEAGSGDVLHLALLQRYFPAQCWLQPDAPGPGEHGLRACLEPGGLGPRTEWWVTFRSDGEMMIAPWPTQAGDPSSGKGSSSGGQP.

The segment at 209 to 229 (PWPTQAGDPSSGKGSSSGGQP) is disordered.

In terms of assembly, interacts with ZSWIM7; they form a functional complex involved in homologous recombination repair and stabilize each other. Interacts with RAD51, RAD51B, RAD51C, RAD51D and XRCC3; involved in homologous recombination repair.

It localises to the nucleus. ATPase which is preferentially stimulated by single-stranded DNA and is involved in homologous recombination repair (HRR). Has a DNA-binding activity which is independent of its ATPase activity. The polypeptide is ATPase SWSAP1 (SWSAP1) (Homo sapiens (Human)).